The sequence spans 91 residues: DNA-directed RNA polymerase subunit Rpo11 (91 aa).

Belongs to the archaeal Rpo11/eukaryotic RPB11/RPC19 RNA polymerase subunit family. As to quaternary structure, part of the RNA polymerase complex.

The protein resides in the cytoplasm. The enzyme catalyses RNA(n) + a ribonucleoside 5'-triphosphate = RNA(n+1) + diphosphate. Functionally, DNA-dependent RNA polymerase (RNAP) catalyzes the transcription of DNA into RNA using the four ribonucleoside triphosphates as substrates. This chain is DNA-directed RNA polymerase subunit Rpo11, found in Methanococcoides burtonii (strain DSM 6242 / NBRC 107633 / OCM 468 / ACE-M).